The sequence spans 427 residues: Glutamate-1-semialdehyde 2,1-aminomutase (427 aa).

At K265 the chain carries N6-(pyridoxal phosphate)lysine.

It belongs to the class-III pyridoxal-phosphate-dependent aminotransferase family. HemL subfamily. In terms of assembly, homodimer. The cofactor is pyridoxal 5'-phosphate.

It is found in the cytoplasm. It catalyses the reaction (S)-4-amino-5-oxopentanoate = 5-aminolevulinate. It participates in porphyrin-containing compound metabolism; protoporphyrin-IX biosynthesis; 5-aminolevulinate from L-glutamyl-tRNA(Glu): step 2/2. The polypeptide is Glutamate-1-semialdehyde 2,1-aminomutase (Pseudomonas syringae pv. tomato (strain ATCC BAA-871 / DC3000)).